The sequence spans 209 residues: Leucyl/phenylalanyl-tRNA--protein transferase (209 aa).

It belongs to the L/F-transferase family.

The protein localises to the cytoplasm. The catalysed reaction is N-terminal L-lysyl-[protein] + L-leucyl-tRNA(Leu) = N-terminal L-leucyl-L-lysyl-[protein] + tRNA(Leu) + H(+). It catalyses the reaction N-terminal L-arginyl-[protein] + L-leucyl-tRNA(Leu) = N-terminal L-leucyl-L-arginyl-[protein] + tRNA(Leu) + H(+). The enzyme catalyses L-phenylalanyl-tRNA(Phe) + an N-terminal L-alpha-aminoacyl-[protein] = an N-terminal L-phenylalanyl-L-alpha-aminoacyl-[protein] + tRNA(Phe). Its function is as follows. Functions in the N-end rule pathway of protein degradation where it conjugates Leu, Phe and, less efficiently, Met from aminoacyl-tRNAs to the N-termini of proteins containing an N-terminal arginine or lysine. The sequence is that of Leucyl/phenylalanyl-tRNA--protein transferase from Paramagnetospirillum magneticum (strain ATCC 700264 / AMB-1) (Magnetospirillum magneticum).